The primary structure comprises 78 residues: Metallothionein-like protein type 2 (78 aa).

The protein belongs to the metallothionein superfamily. Type 15 family.

In terms of biological role, metallothioneins have a high content of cysteine residues that bind various heavy metals. The polypeptide is Metallothionein-like protein type 2 (Musa acuminata (Banana)).